The sequence spans 5084 residues: Apicidin F synthase (5084 aa).

The segment at 209-606 (ARILQRQPDK…VGRLDSQVKL (398 aa)) is adenylation 1. The region spanning 731 to 808 (HETDNCQRLL…EAASSMREVV (78 aa)) is the Carrier 1 domain. An O-(pantetheine 4'-phosphoryl)serine modification is found at S768. 2 condensation regions span residues 822–1124 (YPLS…FPIY) and 1309–1609 (EIYC…SILV). Residues 1788 to 2192 (EDPTREAVFS…IGRKDNQIKI (405 aa)) are adenylation 2. Residues 2341–2415 (VVKDDPVSEL…DMAKGMAPLS (75 aa)) form the Carrier 2 domain. S2376 carries the O-(pantetheine 4'-phosphoryl)serine modification. The interval 2415 to 2441 (SLTAPESTSSSSPQSFSTSTSTTIIEN) is disordered. Positions 2421-2437 (STSSSSPQSFSTSTSTT) are enriched in low complexity. Residues 2478 to 2755 (EDIFPCTPMQ…IVTLPRQLNI (278 aa)) are condensation 3. Residues 2935 to 3328 (RNNPRARAVV…GRRDGQIKLR (394 aa)) are adenylation 3. In terms of domain architecture, Carrier 3 spans 3463–3539 (ETWSSSEAIV…DMASRLSRPE (77 aa)). S3500 carries the post-translational modification O-(pantetheine 4'-phosphoryl)serine. Positions 3581–3866 (EDIYPCTPLQ…IATVPSRTTI (286 aa)) are condensation 4. Residues 4029–4426 (RKQVELSPSH…TVSWIGRKDH (398 aa)) form an adenylation 4 region. Positions 4554–4631 (ALKTPKERLL…DMADLLGPLR (78 aa)) constitute a Carrier 4 domain. S4592 carries the O-(pantetheine 4'-phosphoryl)serine modification. The interval 4669 to 4948 (EQIYPCTAYQ…ISKLPLRIQL (280 aa)) is condensation 5.

It belongs to the NRP synthetase family.

The protein operates within secondary metabolite biosynthesis. Non-ribosomal peptide synthetase; part of the gene cluster that mediates the biosynthesis of the cyclic tetrapeptide apicidin F (APF). The non-ribosomal peptide synthetase apf1 incorporates four different amino acids to produce apicidin F: L-phenylalanine, D-pipecolic acid (D-pip), N-methoxy-L-tryptophan and L-2-aminooctanedioic acid. L-Phenylalanine is the only proteinogenic amino acid directly used by apf1. The 3 other apf1 substrates are non-proteinogenic and have to be modified by other enzymes of the cluster. Lysine is converted to delta-1-pyrroline-5-carboxylate (P5C) which is reduced to L-pipecolic acid (L-pip) by apf3. L-pip is epimerized to D-pip, probably by apf1 activity, prior to incorporation. L-Tryptophan is N-oxidyzed by one of the cytochrome P450 monooxygenases (apf7 or apf8), and further methylated at the hydroxy group by the O-methyltransferase apf6 to yield N-methoxy-L-tryptophan. The synthesis of the fourth apf1 substrate is more complex. The fatty acid synthase apf5 is involved in the synthesis of the octanoic acid backbone of L-2-aminooctanedioic acid by fixing one acetyl-CoA unit and three malonyl-CoA units. Then one of the cytochrome P450 monooxygenases (apf7 or apf8) may oxidize this backbone to 2-oxooctanoic acid. The aminotransferase apf4 is predicted to catalyze the exchange of the keto group with an amino group. The next step would be the oxidation of 2-aminooctanoic acid by one of the cytochrome P450 monooxygenases (apf7 or apf8). The last step is the oxidation of 2-amino-8-hydroxyoctanoic acid to 2-aminooctanedioic acid is catalyzed by the FAD-dependent monooxygenase apf9. The polypeptide is Apicidin F synthase (Gibberella fujikuroi (strain CBS 195.34 / IMI 58289 / NRRL A-6831) (Bakanae and foot rot disease fungus)).